The sequence spans 129 residues: Venom CUB domain-containing protein 1 (129 aa).

The N-terminal stretch at 1-18 (MKLLGVLITIYCIASTLA) is a signal peptide. The CUB domain maps to 19 to 121 (IDVNVPSNGM…KASCKAYSIT (103 aa)). A disulfide bridge links C66 with C83.

The protein belongs to the venom CUB family. In terms of processing, contains 2 disulfide bonds. Expressed by the venom gland.

The protein resides in the secreted. The chain is Venom CUB domain-containing protein 1 from Platymeris rhadamanthus (Red spot assassin bug).